Consider the following 187-residue polypeptide: GTP cyclohydrolase 1 (187 aa).

Residues cysteine 78, histidine 81, and cysteine 149 each coordinate Zn(2+).

Belongs to the GTP cyclohydrolase I family. As to quaternary structure, toroid-shaped homodecamer, composed of two pentamers of five dimers.

The enzyme catalyses GTP + H2O = 7,8-dihydroneopterin 3'-triphosphate + formate + H(+). It participates in cofactor biosynthesis; 7,8-dihydroneopterin triphosphate biosynthesis; 7,8-dihydroneopterin triphosphate from GTP: step 1/1. In Wolinella succinogenes (strain ATCC 29543 / DSM 1740 / CCUG 13145 / JCM 31913 / LMG 7466 / NCTC 11488 / FDC 602W) (Vibrio succinogenes), this protein is GTP cyclohydrolase 1.